A 240-amino-acid chain; its full sequence is Zein-alpha A20 (240 aa).

An N-terminal signal peptide occupies residues 1-21 (MATKIFSLLMLLALSACVANA).

This sequence belongs to the zein family.

Its function is as follows. Zeins are major seed storage proteins. The polypeptide is Zein-alpha A20 (Zea mays (Maize)).